We begin with the raw amino-acid sequence, 44 residues long: Photosystem I reaction center subunit IX (44 aa).

A helical membrane pass occupies residues 7 to 27; that stretch reads YLSTAPVLATLWFSSLAGLLI.

This sequence belongs to the PsaJ family.

Its subcellular location is the plastid. The protein resides in the chloroplast thylakoid membrane. In terms of biological role, may help in the organization of the PsaE and PsaF subunits. The protein is Photosystem I reaction center subunit IX of Welwitschia mirabilis (Tree tumbo).